A 571-amino-acid polypeptide reads, in one-letter code: uncharacterized protein (571 aa).

A run of 5 helical transmembrane segments spans residues 10–29 (VRLH…HFIG), 36–55 (VSLG…GLLF), 65–87 (WAFF…FASL), 96–118 (ALAV…LFRF), and 166–188 (ATTY…PRLL). In terms of domain architecture, RCK C-terminal spans 294–378 (TEVDDQELLS…IATAARNLGF (85 aa)). The next 6 helical transmembrane spans lie at 388–406 (LVYL…LLQV), 411–433 (VPLG…WLYS), 446–465 (LRLL…GLAA), 480–502 (LFAK…GLLL), 509–531 (LPPI…LNAL), and 546–568 (VPFA…CAVA).

The protein belongs to the AAE transporter (TC 2.A.81) family.

The protein resides in the cell membrane. This is an uncharacterized protein from Bordetella bronchiseptica (strain ATCC BAA-588 / NCTC 13252 / RB50) (Alcaligenes bronchisepticus).